The primary structure comprises 470 residues: Neuraminidase (470 aa).

Over 1–14 (MNPNQKIITIGSVS) the chain is Intravirion. The involved in apical transport and lipid raft association stretch occupies residues 11 to 32 (GSVSLGLVVLNILLHIVSITIT). The chain crosses the membrane as a helical span at residues 15-35 (LGLVVLNILLHIVSITITVLV). The segment at 32 to 86 (TVLVLPGNGNNGSCNETVIREYNETVRIEKVTQWHNTNVIEYIERPESDHFMNNT) is hypervariable stalk region. At 36-470 (LPGNGNNGSC…AILPFDIDKM (435 aa)) the chain is on the virion surface side. N-linked (GlcNAc...) asparagine; by host glycosylation is found at Asn42, Asn46, Asn54, and Asn84. The interval 89 to 470 (LCDVKGFAPF…AILPFDIDKM (382 aa)) is head of neuraminidase. 8 cysteine pairs are disulfide-bonded: Cys90/Cys417, Cys122/Cys127, Cys182/Cys229, Cys231/Cys236, Cys277/Cys290, Cys279/Cys288, Cys316/Cys335, and Cys421/Cys446. Arg116 serves as a coordination point for substrate. The N-linked (GlcNAc...) asparagine; by host glycan is linked to Asn144. Residue Asp149 is the Proton donor/acceptor of the active site. Arg150 serves as a coordination point for substrate. Substrate is bound at residue 275–276 (EE). Substrate is bound at residue Arg291. Asp292 serves as a coordination point for Ca(2+). Asn293 carries an N-linked (GlcNAc...) asparagine; by host glycan. Positions 296 and 322 each coordinate Ca(2+). Arg368 is a binding site for substrate. N-linked (GlcNAc...) asparagine; by host glycosylation occurs at Asn398. The active-site Nucleophile is the Tyr402.

The protein belongs to the glycosyl hydrolase 34 family. Homotetramer. Requires Ca(2+) as cofactor. N-glycosylated.

It is found in the virion membrane. The protein localises to the host apical cell membrane. It carries out the reaction Hydrolysis of alpha-(2-&gt;3)-, alpha-(2-&gt;6)-, alpha-(2-&gt;8)- glycosidic linkages of terminal sialic acid residues in oligosaccharides, glycoproteins, glycolipids, colominic acid and synthetic substrates.. With respect to regulation, inhibited by the neuraminidase inhibitors zanamivir (Relenza) and oseltamivir (Tamiflu). These drugs interfere with the release of progeny virus from infected cells and are effective against all influenza strains. Resistance to neuraminidase inhibitors is quite rare. Its function is as follows. Catalyzes the removal of terminal sialic acid residues from viral and cellular glycoconjugates. Cleaves off the terminal sialic acids on the glycosylated HA during virus budding to facilitate virus release. Additionally helps virus spread through the circulation by further removing sialic acids from the cell surface. These cleavages prevent self-aggregation and ensure the efficient spread of the progeny virus from cell to cell. Otherwise, infection would be limited to one round of replication. Described as a receptor-destroying enzyme because it cleaves a terminal sialic acid from the cellular receptors. May facilitate viral invasion of the upper airways by cleaving the sialic acid moieties on the mucin of the airway epithelial cells. Likely to plays a role in the budding process through its association with lipid rafts during intracellular transport. May additionally display a raft-association independent effect on budding. Plays a role in the determination of host range restriction on replication and virulence. Sialidase activity in late endosome/lysosome traffic seems to enhance virus replication. This chain is Neuraminidase, found in Aves (Horse).